Reading from the N-terminus, the 92-residue chain is PqqA binding protein (92 aa).

The protein belongs to the PqqD family. In terms of assembly, monomer. Interacts with PqqE.

The protein operates within cofactor biosynthesis; pyrroloquinoline quinone biosynthesis. In terms of biological role, functions as a PqqA binding protein and presents PqqA to PqqE, in the pyrroloquinoline quinone (PQQ) biosynthetic pathway. This Pseudomonas aeruginosa (strain UCBPP-PA14) protein is PqqA binding protein.